A 131-amino-acid chain; its full sequence is Translation initiation factor 5A (131 aa).

The residue at position 37 (Lys-37) is a Hypusine.

Belongs to the eIF-5A family.

It is found in the cytoplasm. Its function is as follows. Functions by promoting the formation of the first peptide bond. In Methanococcus vannielii (strain ATCC 35089 / DSM 1224 / JCM 13029 / OCM 148 / SB), this protein is Translation initiation factor 5A (eIF5A).